Here is a 362-residue protein sequence, read N- to C-terminus: 3-dehydroquinate synthase (362 aa).

NAD(+) is bound by residues 72–77 (SGEEAK), 106–110 (GVTGD), 130–131 (TT), Lys-142, and Lys-151. Positions 184, 246, and 263 each coordinate Zn(2+).

It belongs to the sugar phosphate cyclases superfamily. Dehydroquinate synthase family. The cofactor is Co(2+). Requires Zn(2+) as cofactor. NAD(+) serves as cofactor.

It is found in the cytoplasm. It carries out the reaction 7-phospho-2-dehydro-3-deoxy-D-arabino-heptonate = 3-dehydroquinate + phosphate. It participates in metabolic intermediate biosynthesis; chorismate biosynthesis; chorismate from D-erythrose 4-phosphate and phosphoenolpyruvate: step 2/7. Catalyzes the conversion of 3-deoxy-D-arabino-heptulosonate 7-phosphate (DAHP) to dehydroquinate (DHQ). This is 3-dehydroquinate synthase from Bacillus velezensis (strain DSM 23117 / BGSC 10A6 / LMG 26770 / FZB42) (Bacillus amyloliquefaciens subsp. plantarum).